Here is an 847-residue protein sequence, read N- to C-terminus: Pollen-specific leucine-rich repeat extensin-like protein 2 (847 aa).

The first 20 residues, 1-20 (MERPFGCFFILLLISYTVVA), serve as a signal peptide directing secretion. 8 LRR repeats span residues 45–71 (INKVDPNLKFENDRLKRAYIALQAWKK), 106–130 (LTVVAGVDLNHADIAGHLPPELGLM), 131–153 (TDLALFHINSNRFCGIIPKSLSK), 155–178 (ALMYEFDVSNNRFVGQFPEVSLSW), 179–202 (PSLKFLDLRYNEFEGSLPSEIFDK), 204–224 (LDAIFLNNNRFESVIPGTIGK), 226–248 (KASVVTFANNKFSGCIPKSIGNM), and 249–273 (KNLNEIVFTGNNLTGCFPNEIGLLN). N-linked (GlcNAc...) asparagine glycans are attached at residues Asn-260 and Asn-274. LRR repeat units follow at residues 296–319 (LASVEQLDLSHNKLTGFVVDKFCK) and 321–343 (PNLDSFKFSYNFFNGEAESCVPG). Residues 381 to 847 (KDKCSGGSNG…SPPPPMFQGY (467 aa)) form a disordered region. The segment covering 438 to 484 (PKHESPKPEEPENKHELPKQKESPKPQPSKPEDSPKPEQPKPEESPK) has biased composition (basic and acidic residues). Composition is skewed to pro residues over residues 485–499 (PEQPQIPEPTKPVSP) and 533–642 (VPPP…PPPT). Positions 522 to 847 (SPPPPKVEDT…SPPPPMFQGY (326 aa)) are contains the Ser-Pro(4) repeats. 3 stretches are compositionally biased toward polar residues: residues 667–682 (QVPTPSSESDQSQILS), 688–720 (TPVQSSTPSSEPTQVPTPSSSESYQAPNLSPVQ), and 726–752 (QAPTTSSETSQVPTPSSESNQSPSQAP). Composition is skewed to low complexity over residues 768-783 (PVQSPTPSSEPVSSPE) and 797-811 (NPSSVPSSSPSTDTS). The span at 838–847 (SPPPPMFQGY) shows a compositional bias: pro residues.

In terms of processing, hydroxylated on proline residues in the S-P-P-P-P repeat. O-glycosylated on hydroxyprolines. In terms of tissue distribution, expressed in flowers, stamen, pollen, and pollinated carpels (at protein level).

It is found in the secreted. The protein localises to the cell wall. Functionally, modulates cell morphogenesis by regulating cell wall formation and assembly, and/or growth polarization. The polypeptide is Pollen-specific leucine-rich repeat extensin-like protein 2 (PEX2) (Arabidopsis thaliana (Mouse-ear cress)).